We begin with the raw amino-acid sequence, 197 residues long: Pyridoxal 5'-phosphate synthase subunit PdxT (197 aa).

L-glutamine is bound at residue 53-55 (GES). The active-site Nucleophile is the Cys85. L-glutamine-binding positions include Arg114 and 142 to 143 (IR). Active-site charge relay system residues include His179 and Glu181.

Belongs to the glutaminase PdxT/SNO family. In terms of assembly, in the presence of PdxS, forms a dodecamer of heterodimers. Only shows activity in the heterodimer.

The enzyme catalyses aldehydo-D-ribose 5-phosphate + D-glyceraldehyde 3-phosphate + L-glutamine = pyridoxal 5'-phosphate + L-glutamate + phosphate + 3 H2O + H(+). The catalysed reaction is L-glutamine + H2O = L-glutamate + NH4(+). It functions in the pathway cofactor biosynthesis; pyridoxal 5'-phosphate biosynthesis. Catalyzes the hydrolysis of glutamine to glutamate and ammonia as part of the biosynthesis of pyridoxal 5'-phosphate. The resulting ammonia molecule is channeled to the active site of PdxS. The sequence is that of Pyridoxal 5'-phosphate synthase subunit PdxT from Thermococcus kodakarensis (strain ATCC BAA-918 / JCM 12380 / KOD1) (Pyrococcus kodakaraensis (strain KOD1)).